The chain runs to 284 residues: MKRGCAIAVMICGLITSVSAASAADLIVQEPVFEPLPQPALAGWYLRGDIGYNFKSKTGGKWDFWNQFEEPYRGVDDTFNYDDFSLKGGASYGVGVGYRFNDMLRTDLTLDYFRASINGRTNCPSYVKSSHGLNPVEDNCHYEDNSKASVWTAMANAYVDLPRVGPLTPYLGAGIGAAYVKYDTWKTSEICPTCTLQSDKDGFDSWRFAMALMAGVSYDLTDQLKLDLGYRYLRVNGGNAYGYDEQDRQVINQYGQGAGADGPQAKDNGFNIHTVRAGLRYEFR.

The first 23 residues, 1 to 23 (MKRGCAIAVMICGLITSVSAASA), serve as a signal peptide directing secretion.

It belongs to the surface antigen msp4 family.

This is an uncharacterized protein from Brucella melitensis biotype 1 (strain ATCC 23456 / CCUG 17765 / NCTC 10094 / 16M).